Here is a 575-residue protein sequence, read N- to C-terminus: Estrogen receptor beta (575 aa).

Positions 1–160 (MSSSLSPTLQ…GAVVKRDMHF (160 aa)) are modulating. Positions 108–151 (DTKPHTSGRHSSFLSRPKLFGKRPEDGDGDEALDDDDPSSSSSG) are disordered. A compositionally biased stretch (acidic residues) spans 134–145 (GDGDEALDDDDP). NR C4-type zinc fingers lie at residues 161–181 (CVVC…CEGC) and 197–221 (CPAT…LRKC). The nuclear receptor DNA-binding region spans 161 to 226 (CVVCHDYASG…RLRKCYEMGM (66 aa)). The NR LBD domain maps to 290–526 (SPEQLVYCIL…DLLLEMLDAN (237 aa)). Residues 537–549 (VCTDPVTPATSPN) are compositionally biased toward polar residues. The interval 537-557 (VCTDPVTPATSPNTPLPPQLH) is disordered.

Belongs to the nuclear hormone receptor family. NR3 subfamily. As to quaternary structure, binds DNA as a homodimer. Can form a heterodimer with ER-alpha. Ovary and testis.

The protein localises to the nucleus. In terms of biological role, binds estrogens with an affinity similar to that of ER-alpha, and activates expression of reporter genes containing estrogen response elements (ERE) in an estrogen-dependent manner. This Ictalurus punctatus (Channel catfish) protein is Estrogen receptor beta (esr2).